Here is a 439-residue protein sequence, read N- to C-terminus: Enolase (439 aa).

2 residues coordinate substrate: H160 and E169. E212 serves as the catalytic Proton donor. D247, E296, and D323 together coordinate Mg(2+). Residues E296 and D323 each contribute to the substrate site. The Proton acceptor role is filled by K348. Residues 375–378 (SHRS) and K399 each bind substrate.

This sequence belongs to the enolase family. Homodimer. Mg(2+) is required as a cofactor.

It localises to the cytoplasm. It carries out the reaction (2R)-2-phosphoglycerate = phosphoenolpyruvate + H2O. It participates in carbohydrate degradation; glycolysis; pyruvate from D-glyceraldehyde 3-phosphate: step 4/5. The polypeptide is Enolase (ENO) (Rhodotorula mucilaginosa (Yeast)).